The following is a 496-amino-acid chain: Cytochrome P450 71D95 (496 aa).

The chain crosses the membrane as a helical; Signal-anchor span at residues 2–22 (ELQISSAIIILVATFVASLLI). Heme is bound at residue C436.

Belongs to the cytochrome P450 family. Heme is required as a cofactor.

The protein localises to the endoplasmic reticulum membrane. The catalysed reaction is (4S)-limonene + reduced [NADPH--hemoprotein reductase] + O2 = (1S,6R)-isopiperitenol + oxidized [NADPH--hemoprotein reductase] + H2O + H(+). In terms of biological role, hydroxylates both (+)- and (-)-limonene to (+) and (-)-trans-isopiperitenol. The sequence is that of Cytochrome P450 71D95 (CYP71D95) from Mentha spicata (Spearmint).